A 498-amino-acid polypeptide reads, in one-letter code: tRNA-guanine(15) transglycosylase (498 aa).

Aspartate 85 (nucleophile) is an active-site residue. Aspartate 120 provides a ligand contact to substrate. Zn(2+) contacts are provided by cysteine 275, cysteine 277, and cysteine 280.

Belongs to the archaeosine tRNA-ribosyltransferase family. It depends on Zn(2+) as a cofactor.

The catalysed reaction is guanosine(15) in tRNA + 7-cyano-7-deazaguanine = 7-cyano-7-carbaguanosine(15) in tRNA + guanine. Its pathway is tRNA modification; archaeosine-tRNA biosynthesis. Its function is as follows. Exchanges the guanine residue with 7-cyano-7-deazaguanine (preQ0) at position 15 in the dihydrouridine loop (D-loop) of archaeal tRNAs. The protein is tRNA-guanine(15) transglycosylase of Sulfolobus acidocaldarius (strain ATCC 33909 / DSM 639 / JCM 8929 / NBRC 15157 / NCIMB 11770).